Consider the following 64-residue polypeptide: Large ribosomal subunit protein bL35 (64 aa).

Basic residues-rich tracts occupy residues 1–15 and 27–42; these read MPKN…KRFK and AGKR…KKTR. Residues 1–45 are disordered; sequence MPKNKTHSGASKRFKITGSGKVLRERAGKRHLLEHKSSKKTRSLT.

This sequence belongs to the bacterial ribosomal protein bL35 family.

In Streptomyces griseus subsp. griseus (strain JCM 4626 / CBS 651.72 / NBRC 13350 / KCC S-0626 / ISP 5235), this protein is Large ribosomal subunit protein bL35.